A 320-amino-acid chain; its full sequence is ATP-dependent 6-phosphofructokinase (320 aa).

An ATP-binding site is contributed by glycine 11. Residue 21–25 participates in ADP binding; sequence RAVTK. ATP is bound by residues 72–73 and 102–105; these read RF and GDGS. Position 103 (aspartate 103) interacts with Mg(2+). Residue 125–127 coordinates substrate; sequence TID. Aspartate 127 acts as the Proton acceptor in catalysis. Position 154 (arginine 154) interacts with ADP. Substrate-binding positions include arginine 162 and 169-171; that span reads MGR. Residues 185–187 and 213–215 contribute to the ADP site; these read GAD and KDH. Substrate-binding positions include glutamate 222, arginine 243, and 249–252; that span reads HMQR.

Belongs to the phosphofructokinase type A (PFKA) family. ATP-dependent PFK group I subfamily. Prokaryotic clade 'B1' sub-subfamily. Homotetramer. Requires Mg(2+) as cofactor.

It localises to the cytoplasm. It carries out the reaction beta-D-fructose 6-phosphate + ATP = beta-D-fructose 1,6-bisphosphate + ADP + H(+). The protein operates within carbohydrate degradation; glycolysis; D-glyceraldehyde 3-phosphate and glycerone phosphate from D-glucose: step 3/4. With respect to regulation, allosterically activated by ADP and other diphosphonucleosides, and allosterically inhibited by phosphoenolpyruvate. Functionally, catalyzes the phosphorylation of D-fructose 6-phosphate to fructose 1,6-bisphosphate by ATP, the first committing step of glycolysis. This is ATP-dependent 6-phosphofructokinase from Lactobacillus acidophilus (strain ATCC 700396 / NCK56 / N2 / NCFM).